The chain runs to 92 residues: LYR motif-containing protein 4 homolog (92 aa).

Residues Ala40–Val68 are a coiled coil.

This sequence belongs to the complex I LYR family. In terms of assembly, component of the mitochondrial core iron-sulfur cluster (ISC) assembly complex at least composed of the cysteine desulfurase Nfs1, the scaffold protein IscU, the accessory protein bcn92/Isd11/Lyrm4, and probably fh/frataxin. Interacts with Nfs1.

The protein localises to the mitochondrion. Its function is as follows. Stabilizing factor of the core iron-sulfur cluster (ISC) assembly complex that regulates the stability and cysteine desulfurase activity of Nfs1 and participates in the [2Fe-2S] clusters assembly on the scaffolding protein IscU. This Drosophila subobscura (Fruit fly) protein is LYR motif-containing protein 4 homolog.